The primary structure comprises 33 residues: Protamine-1B (33 aa).

The interval 1–33 (PRRRRRRSSSRPIRRRRPRRVSRRRRRGGRRRR) is disordered.

Testis.

It localises to the nucleus. The protein resides in the chromosome. Its function is as follows. Protamines substitute for histones in the chromatin of sperm during the haploid phase of spermatogenesis. They compact sperm DNA into a highly condensed, stable and inactive complex. This chain is Protamine-1B, found in Oncorhynchus mykiss (Rainbow trout).